The sequence spans 175 residues: MSTKEIICTLKGQFFLSPREEKFLRLLEEMGIPEEDIQEGIRECLKSVSPKKRKNFPLFKCFSKILEVNKVRALERGKREHLDWKRVFERKVSVVKHLLDFNYTEPKTEEEAEKTLQEIERKIFKKLWENLDKERKREIYNKYKEVKEDEELFKELIKHELRKIFQIPVLSLYVD.

Positions Lys107–Glu138 form a coiled coil.

This is an uncharacterized protein from Aquifex aeolicus (strain VF5).